Consider the following 618-residue polypeptide: Glucose starvation modulator protein 1 (618 aa).

Positions 20–48 form a DNA-binding region, zn(2)-C6 fungal-type; the sequence is CEFCHTKHIQCDVGRPCQNCLKRNIGKFC. A disordered region spans residues 325–353; sequence ANANTQPSHNAKLESECDSSSHSDADLEK. The segment covering 335-353 has biased composition (basic and acidic residues); it reads AKLESECDSSSHSDADLEK. In terms of domain architecture, PAS spans 466–538; sequence LLDLENMAKL…QIFNELLAFG (73 aa).

The protein belongs to the ERT1/acuK family.

The protein resides in the nucleus. Functionally, transcription factor which regulates nonfermentable carbon utilization. Binds specifically to 5'-CGGN(8)CGG-3' and 5'-CGGN(9)CGG-3' sequences in the promoter region. This chain is Glucose starvation modulator protein 1 (GSM1), found in Saccharomyces cerevisiae (strain JAY291) (Baker's yeast).